Here is a 344-residue protein sequence, read N- to C-terminus: Mitogen-activated protein kinase mpkC (344 aa).

The 280-residue stretch at 19–298 (YANVQPVGLG…AETALQHPYL (280 aa)) folds into the Protein kinase domain. ATP is bound by residues 25–33 (VGLGAFGLV) and lysine 48. Catalysis depends on aspartate 140, which acts as the Proton acceptor. At threonine 170 the chain carries Phosphothreonine. A TXY motif is present at residues 170-172 (TGY). Position 172 is a phosphotyrosine (tyrosine 172).

The protein belongs to the protein kinase superfamily. Ser/Thr protein kinase family. MAP kinase subfamily. HOG1 sub-subfamily. Mg(2+) is required as a cofactor. Dually phosphorylated on Thr-170 and Tyr-172, which activates the enzyme.

The enzyme catalyses L-seryl-[protein] + ATP = O-phospho-L-seryl-[protein] + ADP + H(+). It carries out the reaction L-threonyl-[protein] + ATP = O-phospho-L-threonyl-[protein] + ADP + H(+). With respect to regulation, activated by tyrosine and threonine phosphorylation. In terms of biological role, mitogen-activated protein kinase required for growth on media where sorbitol or mannitol is the sole carbon source. This Aspergillus oryzae (strain ATCC 42149 / RIB 40) (Yellow koji mold) protein is Mitogen-activated protein kinase mpkC (mpkC).